A 240-amino-acid polypeptide reads, in one-letter code: Orotidine 5'-phosphate decarboxylase (240 aa).

Residues Asp15, Lys37, 64–73 (DLKYHDIPNT), Thr127, Arg188, Gln197, Gly217, and Arg218 contribute to the substrate site. The Proton donor role is filled by Lys66.

It belongs to the OMP decarboxylase family. Type 1 subfamily. Homodimer.

The catalysed reaction is orotidine 5'-phosphate + H(+) = UMP + CO2. It functions in the pathway pyrimidine metabolism; UMP biosynthesis via de novo pathway; UMP from orotate: step 2/2. Its function is as follows. Catalyzes the decarboxylation of orotidine 5'-monophosphate (OMP) to uridine 5'-monophosphate (UMP). This is Orotidine 5'-phosphate decarboxylase from Geobacter sp. (strain M21).